Here is a 61-residue protein sequence, read N- to C-terminus: Photosystem II reaction center protein Z (61 aa).

Helical transmembrane passes span 5–25 (LTALLVLISLGLIVTVPVALA) and 38–58 (TKGFQAWVALVLVIAAADGVA).

This sequence belongs to the PsbZ family. As to quaternary structure, PSII is composed of 1 copy each of membrane proteins PsbA, PsbB, PsbC, PsbD, PsbE, PsbF, PsbH, PsbI, PsbJ, PsbK, PsbL, PsbM, PsbT, PsbX, PsbY, PsbZ, Psb30/Ycf12, at least 3 peripheral proteins of the oxygen-evolving complex and a large number of cofactors. It forms dimeric complexes.

It is found in the plastid. It localises to the chloroplast thylakoid membrane. Its function is as follows. May control the interaction of photosystem II (PSII) cores with the light-harvesting antenna, regulates electron flow through the 2 photosystem reaction centers. PSII is a light-driven water plastoquinone oxidoreductase, using light energy to abstract electrons from H(2)O, generating a proton gradient subsequently used for ATP formation. This is Photosystem II reaction center protein Z from Phaeodactylum tricornutum (strain CCAP 1055/1).